The chain runs to 589 residues: PTS system mannitol-specific EIICB component (589 aa).

The Cytoplasmic portion of the chain corresponds to 1–25 (MEEKVSLKVRVQKLGTSLSNMVMPN). The PTS EIIC type-2 domain maps to 14 to 347 (LGTSLSNMVM…LHADKSTEDS (334 aa)). The chain crosses the membrane as a helical span at residues 26–47 (IGAFIAWGVLTALFIADGYLPN). Over 48-51 (EQLA) the chain is Extracellular. Residues 52 to 72 (TVVGPMLTYLLPILIGYTGGY) traverse the membrane as a helical segment. Over 73–135 (MIHGQRGAVV…PGFEMLVNNF (63 aa)) the chain is Cytoplasmic. Residues 136-157 (SAGLVGFALLLLAFYAIGPVVS) traverse the membrane as a helical segment. Residues 158-166 (TLTGAVGNG) lie on the Extracellular side of the membrane. A helical membrane pass occupies residues 167–187 (VEAIVNARLLPMANIIIEPAK). Residues 188 to 274 (VLFLNNALNH…VMMKPTLFLA (87 aa)) lie on the Cytoplasmic side of the membrane. Residues 275–294 (AMAGGISGTFTFQLLDAGLK) form a helical membrane-spanning segment. The Extracellular portion of the chain corresponds to 295-316 (SPASPGSIIAIIATAPKGVWPH). Residues 317-338 (LNVLLGVLVAAVVSFLVAALIL) form a helical membrane-spanning segment. Topologically, residues 339-589 (HADKSTEDSL…YDKMAARMYK (251 aa)) are cytoplasmic. The PTS EIIB type-2 domain maps to 381 to 476 (EKIIFACDAG…SLTGASPIAE (96 aa)). Catalysis depends on Cys-387, which acts as the Phosphocysteine intermediate; for EIIB activity. Phosphocysteine; by EIIA is present on Cys-387.

As to quaternary structure, homodimer.

It localises to the cell membrane. It carries out the reaction D-mannitol(out) + N(pros)-phospho-L-histidyl-[protein] = D-mannitol 1-phosphate(in) + L-histidyl-[protein]. The phosphoenolpyruvate-dependent sugar phosphotransferase system (sugar PTS), a major carbohydrate active transport system, catalyzes the phosphorylation of incoming sugar substrates concomitantly with their translocation across the cell membrane. The enzyme II CmtAB PTS system is involved in D-mannitol transport. This is PTS system mannitol-specific EIICB component (mtlA) from Streptococcus pneumoniae serotype 4 (strain ATCC BAA-334 / TIGR4).